A 239-amino-acid chain; its full sequence is Flagellar L-ring protein (239 aa).

A signal peptide spans 1–16 (MKPVILATASALLLAA). Cysteine 17 is lipidated: N-palmitoyl cysteine. The S-diacylglycerol cysteine moiety is linked to residue cysteine 17. The span at 120–138 (SGSTSGSASGNLGLTGDTS) shows a compositional bias: polar residues. A disordered region spans residues 120-145 (SGSTSGSASGNLGLTGDTSTDGKGKI).

This sequence belongs to the FlgH family. As to quaternary structure, the basal body constitutes a major portion of the flagellar organelle and consists of four rings (L,P,S, and M) mounted on a central rod.

The protein localises to the cell outer membrane. Its subcellular location is the bacterial flagellum basal body. In terms of biological role, assembles around the rod to form the L-ring and probably protects the motor/basal body from shearing forces during rotation. The sequence is that of Flagellar L-ring protein from Azorhizobium caulinodans (strain ATCC 43989 / DSM 5975 / JCM 20966 / LMG 6465 / NBRC 14845 / NCIMB 13405 / ORS 571).